Reading from the N-terminus, the 127-residue chain is uncharacterized protein (127 aa).

The chain crosses the membrane as a helical span at residues 91-113 (IYLIVSIAVSILAIIAFFIFLML).

The protein resides in the membrane. This is an uncharacterized protein from Bacillus subtilis (strain 168).